A 341-amino-acid polypeptide reads, in one-letter code: Spore photoproduct lyase (341 aa).

Residues S76–R304 enclose the Radical SAM core domain. Residues C90, C94, and C97 each contribute to the [4Fe-4S] cluster site. The segment at residues Q217–A234 is a DNA-binding region (H-T-H motif).

The protein belongs to the radical SAM superfamily. SPL family. Monomer or homodimer. Requires [4Fe-4S] cluster as cofactor. It depends on S-adenosyl-L-methionine as a cofactor.

The catalysed reaction is (5R)-5,6-dihydro-5-(thymidin-7-yl)thymidine in DNA = a thymidine dimer in DNA. Involved in repair of UV radiation-induced DNA damage during spore germination. Can repair thymine dimer 5-thyminyl-5,6-dihydrothymine (known as spore photoproduct (SP)) by in situ monomerization of SP to two thymines. This Geobacillus sp. (strain Y412MC61) protein is Spore photoproduct lyase (splG).